A 90-amino-acid chain; its full sequence is Small ribosomal subunit protein bS16 (90 aa).

The protein belongs to the bacterial ribosomal protein bS16 family.

This is Small ribosomal subunit protein bS16 from Oceanobacillus iheyensis (strain DSM 14371 / CIP 107618 / JCM 11309 / KCTC 3954 / HTE831).